The sequence spans 216 residues: Large ribosomal subunit protein uL1 (216 aa).

Belongs to the universal ribosomal protein uL1 family. Part of the 50S ribosomal subunit.

In terms of biological role, binds directly to 23S rRNA. Probably involved in E site tRNA release. Functionally, protein L1 is also a translational repressor protein, it controls the translation of its operon by binding to its mRNA. In Thermococcus kodakarensis (strain ATCC BAA-918 / JCM 12380 / KOD1) (Pyrococcus kodakaraensis (strain KOD1)), this protein is Large ribosomal subunit protein uL1.